We begin with the raw amino-acid sequence, 341 residues long: Protein DOWNY MILDEW RESISTANCE 6 (341 aa).

Residues glutamine 188–proline 288 enclose the Fe2OG dioxygenase domain. Positions 212, 214, and 269 each coordinate Fe cation. Arginine 279 is a binding site for 2-oxoglutarate.

It belongs to the iron/ascorbate-dependent oxidoreductase family. Fe(2+) is required as a cofactor.

It catalyses the reaction salicylate + NADH + O2 + H(+) = 2,3-dihydroxybenzoate + NAD(+) + H2O. Its function is as follows. Converts salicylic acid (SA) to 2,3-dihydroxybenzoic acid (2,3-DHBA). Suppressor of immunity. Regulates negatively defense associated genes expression (e.g. PR-1, PR-2, and PR-5). Negative regulator of defense against Hyaloperonospora arabidopsidis. Functionally, (Microbial infection) Required for susceptibility to the downy mildew pathogen Hyaloperonospora arabidopsidis. In terms of biological role, (Microbial infection) Required for susceptibility to Pseudomonas syringae pv. tomato DC3000. (Microbial infection) Required for susceptibility to the oomycete Phytophthora capsici. In Arabidopsis thaliana (Mouse-ear cress), this protein is Protein DOWNY MILDEW RESISTANCE 6.